A 107-amino-acid chain; its full sequence is U1-lycotoxin-Ls1g (107 aa).

Residues 1–20 (MMKVLVVVALLVTLISYSSS) form the signal peptide. Positions 21–41 (EGIDDLEADELLSLMANEQTR) are excised as a propeptide. Cystine bridges form between C51–C68, C58–C86, and C70–C84.

This sequence belongs to the neurotoxin 19 (CSTX) family. 04 (U1-Lctx) subfamily. As to expression, expressed by the venom gland.

The protein resides in the secreted. The polypeptide is U1-lycotoxin-Ls1g (Lycosa singoriensis (Wolf spider)).